The chain runs to 158 residues: D-aminoacyl-tRNA deacylase (158 aa).

Positions 144-145 match the Gly-cisPro motif, important for rejection of L-amino acids motif; that stretch reads GP.

It belongs to the DTD family. In terms of assembly, homodimer.

The protein localises to the cytoplasm. The enzyme catalyses glycyl-tRNA(Ala) + H2O = tRNA(Ala) + glycine + H(+). The catalysed reaction is a D-aminoacyl-tRNA + H2O = a tRNA + a D-alpha-amino acid + H(+). In terms of biological role, an aminoacyl-tRNA editing enzyme that deacylates mischarged D-aminoacyl-tRNAs. Also deacylates mischarged glycyl-tRNA(Ala), protecting cells against glycine mischarging by AlaRS. Acts via tRNA-based rather than protein-based catalysis; rejects L-amino acids rather than detecting D-amino acids in the active site. By recycling D-aminoacyl-tRNA to D-amino acids and free tRNA molecules, this enzyme counteracts the toxicity associated with the formation of D-aminoacyl-tRNA entities in vivo and helps enforce protein L-homochirality. The chain is D-aminoacyl-tRNA deacylase from Corynebacterium kroppenstedtii (strain DSM 44385 / JCM 11950 / CIP 105744 / CCUG 35717).